The chain runs to 926 residues: Protein Niban 1 (926 aa).

A lipid anchor (N-myristoyl glycine) is attached at Gly-2. Ser-578, Ser-581, Ser-595, Ser-601, and Ser-640 each carry phosphoserine. Disordered regions lie at residues 604-699 (LPGA…VPGS) and 719-889 (VEND…EQVN). Residues 661-672 (VENTAGPLSSHL) are compositionally biased toward polar residues. The residue at position 699 (Ser-699) is a Phosphoserine. A compositionally biased stretch (basic and acidic residues) spans 733–745 (NIKEEESKIHPEA). At Ser-755 the chain carries Phosphoserine. Residues 756-767 (CEEREVREKEAQ) are compositionally biased toward basic and acidic residues. The segment covering 784-797 (GRGSTSQSTSGGLT) has biased composition (low complexity). Positions 840–854 (VTVTPQEDATLSSNP) are enriched in polar residues. The residue at position 923 (Ser-923) is a Phosphoserine.

The protein belongs to the Niban family.

Its subcellular location is the cytoplasm. It localises to the membrane. Functionally, regulates phosphorylation of a number of proteins involved in translation regulation including EIF2A, EIF4EBP1 and RPS6KB1. May be involved in the endoplasmic reticulum stress response. The protein is Protein Niban 1 of Mus musculus (Mouse).